The sequence spans 1219 residues: Myosin-5 (1219 aa).

Over residues 1-12 the composition is skewed to basic residues; sequence MAILKRGARKKV. The tract at residues 1-20 is disordered; sequence MAILKRGARKKVHQEPAKRS. The region spanning 36–715 is the Myosin motor domain; that stretch reads VGVSDLTLLS…TLFALEHMRD (680 aa). 129–136 provides a ligand contact to ATP; the sequence is GESGAGKT. Ser357 carries the phosphoserine modification. Position 359 is a phosphotyrosine (Tyr359). Residues 404-486 form an actin-binding region; sequence SIGILDIYGF…PGIFAAMNDS (83 aa). 2 IQ domains span residues 719–739 and 740–765; these read HNMAARIQRAWRRFLQRRIDA and ATKIQRTIRERKEGNKYEKLRDYGTK. Residues 771–961 enclose the TH1 domain; the sequence is KERRSMSLLG…TISVRRGNPP (191 aa). Ser777 bears the Phosphoserine mark. Polar residues predominate over residues 951–964; it reads STISVRRGNPPNSQ. Disordered regions lie at residues 951-1106 and 1139-1167; these read STIS…SELP and TAYMKPHSGNNNIPTPPQNRDVPKPVLNS. A compositionally biased stretch (low complexity) spans 974–984; it reads SISSGYHASSS. Phosphoserine is present on Ser992. Over residues 1030–1041 the composition is skewed to polar residues; the sequence is NPASTLTASQSN. Residues 1048-1063 show a composition bias toward low complexity; it reads TAATRATPAATPAAAA. A compositionally biased stretch (pro residues) spans 1072-1083; the sequence is IPPPPPPPPPSS. The SH3 domain occupies 1085 to 1147; sequence PKEPMFEAAY…PTAYMKPHSG (63 aa). Ser1205 carries the phosphoserine modification.

It belongs to the TRAFAC class myosin-kinesin ATPase superfamily. Myosin family. Interacts (via myosin motor domain) with SHE4; this interaction is important for proper localization and may regulate the interaction of the motor domain with actin. Interacts (via SH3 domain) with VRP1; this interaction is required for localization to sites of polarized growth and may regulate the interaction of the tail domain with actin. Interacts (via SH3 domain) with PAN1; this interaction is important for late stages of endocytopsis. Interacts (via SH3 domain) with BBC1 and LAS17. Interacts (via C-terminal acidic tail) with ARC19 and ARC40; ARC19 and ARC40 are Arp2/3 complex subunits. Interacts with BZZ1, PKH1, PKH2, YPK1 and YPK2. Phosphorylation of the TEDS site (Ser-357) is required for the polarization of the actin cytoskeleton and for ligand-induced, but not for constitutive internalization of STE2. Phosphorylation probably activates the myosin-I ATPase activity. Ser-357 is phosphorylated by YPK2 in vitro.

It localises to the cytoplasm. The protein localises to the cytoskeleton. It is found in the actin patch. In terms of biological role, one of two redundant type-I myosins implicated in the organization of the actin cytoskeleton. Required for proper actin cytoskeleton polarization and for the internalization step in endocytosis. At the cell cortex, assembles in patch-like structures together with proteins from the actin-polymerizing machinery and promotes actin assembly. Functions redundantly with LAS17 as actin nucleation-promoting factor (NPF) for the Arp2/3 complex. Motor domain phosphorylation by PAK kinases CLA4 and STE20 promotes CDC42-regulated actin assembly. Functions together with the NPF PAN1 in late stages of endocytosis. Motor domain phosphorylation by PDK1 kinases PKH1 and PKH2, and by SGK kinases YPK1 and YPK2, promotes ligand-induced, but not constitutive endocytosis of the G protein-coupled receptor STE2. The chain is Myosin-5 (MYO5) from Saccharomyces cerevisiae (strain YJM789) (Baker's yeast).